Here is a 183-residue protein sequence, read N- to C-terminus: Glutamyl-tRNA(Gln) amidotransferase subunit F, mitochondrial (183 aa).

A mitochondrion-targeting transit peptide spans Met1–Tyr23.

This sequence belongs to the GatF family. Subunit of the heterotrimeric GatFAB amidotransferase (AdT) complex, composed of A, B and F subunits.

The protein resides in the mitochondrion inner membrane. The catalysed reaction is L-glutamyl-tRNA(Gln) + L-glutamine + ATP + H2O = L-glutaminyl-tRNA(Gln) + L-glutamate + ADP + phosphate + H(+). In terms of biological role, allows the formation of correctly charged Gln-tRNA(Gln) through the transamidation of misacylated Glu-tRNA(Gln) in the mitochondria. The reaction takes place in the presence of glutamine and ATP through an activated gamma-phospho-Glu-tRNA(Gln). Required for proper protein synthesis within the mitochondrion. The protein is Glutamyl-tRNA(Gln) amidotransferase subunit F, mitochondrial of Debaryomyces hansenii (strain ATCC 36239 / CBS 767 / BCRC 21394 / JCM 1990 / NBRC 0083 / IGC 2968) (Yeast).